Here is a 317-residue protein sequence, read N- to C-terminus: Taste receptor type 2 member 14 (317 aa).

Over 1-7 (MGGVIKS) the chain is Extracellular. Residues 8 to 28 (IFTFVLIVEFIIGNLGNSFIA) form a helical membrane-spanning segment. The Cytoplasmic portion of the chain corresponds to 29-55 (LVNCIDWVKGRKISSVDRILTALAISK). The chain crosses the membrane as a helical span at residues 56-76 (ISLVWLIFGSWCVSVFFPALF). At 77–87 (ATEKMFRMLTN) the chain is on the extracellular side. Residues threonine 86 and tryptophan 89 each contribute to the cholesterol site. A helical transmembrane segment spans residues 88–108 (IWTVINHFSVWLATGLGTFYF). At 109 to 129 (LKIANFSNSIFLYLKWRVKKV) the chain is on the cytoplasmic side. Residues 130–150 (VLVLLLVTSVFLFLNIALINI) traverse the membrane as a helical segment. Residues 151–184 (HINASINGYRRNKTCSSDSSNFTRFSSLIVLTST) lie on the Extracellular side of the membrane. Residues asparagine 153, asparagine 162, and asparagine 171 are each glycosylated (N-linked (GlcNAc...) asparagine). Position 180 (valine 180) interacts with cholesterol. A helical transmembrane segment spans residues 185 to 205 (VFIFIPFTLSLAMFLLLIFSM). Residues 206 to 232 (WKHRKKMQHTVKRSGDASTKAHRGVKS) lie on the Cytoplasmic side of the membrane. The helical transmembrane segment at 233 to 253 (MMTFFLLYAIFSLSFFISVWT) threads the bilayer. Residues 254–261 (SERLEENL) lie on the Extracellular side of the membrane. Residues 262–282 (IILSQVMGMAYPSCHSCVLIL) form a helical membrane-spanning segment. Positions 265 and 268 each coordinate cholesterol. Topologically, residues 283–317 (GNKKLRQASLSVLLWLRYMFKDGEPSGHKEFRESS) are cytoplasmic.

This sequence belongs to the G-protein coupled receptor T2R family. In terms of assembly, core component of the TAS2R14-GNAI1 complex, consisting of TAS2R14, GNAI1, GNB1 and GNG2; within the complex interacts with GNAI1. Core component of the TAS2R14-GNAT3 complex, consisting of TAS2R14, GNAT3, GNB1 and GNG2; within the complex interacts with GNAT3. Core component of the TAS2R14-GNAS2 complex, consisting of TAS2R14, GNAS2, GNB1 and GNG2; within the complex interacts with GNAS2.

It is found in the membrane. The enzyme catalyses Ca(2+)(in) = Ca(2+)(out). It catalyses the reaction 3',5'-cyclic AMP(in) = 3',5'-cyclic AMP(out). Its activity is regulated as follows. Basal activity is enhanced by binding to bitter tastants, such as flufenamic acid and aristolochic acid. Regulated by cholesterol in a concentration-dependent manner. Gustducin-linked G-protein coupled receptor that plays a role in the perception of bitterness. The activity of this receptor stimulates GNAT3, activating the gustducin G-protein pathway. Likely plays a role in sensing the chemical composition of the gastrointestinal content and other extra-oral tissues via the inhibitory G-protein pathways. This is Taste receptor type 2 member 14 (TAS2R14) from Pan paniscus (Pygmy chimpanzee).